A 124-amino-acid chain; its full sequence is 14 kDa phosphohistidine phosphatase (124 aa).

Position 20 (K20) interacts with substrate. H52 (proton acceptor) is an active-site residue. 93–95 lines the substrate pocket; sequence SMG.

Belongs to the janus family. In terms of assembly, monomer.

Its subcellular location is the cytoplasm. The enzyme catalyses N(pros)-phospho-L-histidyl-[protein] + H2O = L-histidyl-[protein] + phosphate. It catalyses the reaction N(tele)-phospho-L-histidyl-[protein] + H2O = L-histidyl-[protein] + phosphate. Functionally, exhibits phosphohistidine phosphatase activity. This is 14 kDa phosphohistidine phosphatase (Phpt1) from Mus musculus (Mouse).